Consider the following 877-residue polypeptide: DNA polymerase I (877 aa).

Positions 177-270 (TPAQFIDLKA…LEDLVYSGPD (94 aa)) constitute a 5'-3' exonuclease domain. Residues 302–465 (DFTIVDQISQ…TEPILLEKLS (164 aa)) form the 3'-5' exonuclease domain.

Belongs to the DNA polymerase type-A family. As to quaternary structure, single-chain monomer with multiple functions.

The enzyme catalyses DNA(n) + a 2'-deoxyribonucleoside 5'-triphosphate = DNA(n+1) + diphosphate. Its function is as follows. In addition to polymerase activity, this DNA polymerase exhibits 3'-5' and 5'-3' exonuclease activity. This chain is DNA polymerase I (polA), found in Streptococcus pneumoniae serotype 4 (strain ATCC BAA-334 / TIGR4).